The chain runs to 279 residues: Ribosomal RNA small subunit methyltransferase A (279 aa).

Residues H12, L14, G39, E60, D81, and N118 each coordinate S-adenosyl-L-methionine.

The protein belongs to the class I-like SAM-binding methyltransferase superfamily. rRNA adenine N(6)-methyltransferase family. RsmA subfamily.

The protein resides in the cytoplasm. The enzyme catalyses adenosine(1518)/adenosine(1519) in 16S rRNA + 4 S-adenosyl-L-methionine = N(6)-dimethyladenosine(1518)/N(6)-dimethyladenosine(1519) in 16S rRNA + 4 S-adenosyl-L-homocysteine + 4 H(+). Its function is as follows. Specifically dimethylates two adjacent adenosines (A1518 and A1519) in the loop of a conserved hairpin near the 3'-end of 16S rRNA in the 30S particle. May play a critical role in biogenesis of 30S subunits. The chain is Ribosomal RNA small subunit methyltransferase A from Polaromonas naphthalenivorans (strain CJ2).